The primary structure comprises 86 residues: DNA-directed RNA polymerase subunit omega (86 aa).

It belongs to the RNA polymerase subunit omega family. As to quaternary structure, the RNAP catalytic core consists of 2 alpha, 1 beta, 1 beta' and 1 omega subunit. When a sigma factor is associated with the core the holoenzyme is formed, which can initiate transcription.

It catalyses the reaction RNA(n) + a ribonucleoside 5'-triphosphate = RNA(n+1) + diphosphate. Functionally, promotes RNA polymerase assembly. Latches the N- and C-terminal regions of the beta' subunit thereby facilitating its interaction with the beta and alpha subunits. This Agathobacter rectalis (strain ATCC 33656 / DSM 3377 / JCM 17463 / KCTC 5835 / VPI 0990) (Eubacterium rectale) protein is DNA-directed RNA polymerase subunit omega.